The following is a 367-amino-acid chain: Bi-functional coumaroyl CoA and feruloyl CoA ortho-hydroxylase Diox4 (367 aa).

The Fe2OG dioxygenase domain occupies 207 to 317; that stretch reads IREPMLVGSR…RISVPLFVNP (111 aa). Tyr223 serves as a coordination point for 2-oxoglutarate. His238, Asp240, and His298 together coordinate Fe cation. Arg308 and Ser310 together coordinate 2-oxoglutarate.

Belongs to the iron/ascorbate-dependent oxidoreductase family. Requires L-ascorbate as cofactor. The cofactor is Fe(2+).

The catalysed reaction is (E)-4-coumaroyl-CoA + 2-oxoglutarate + O2 = (E)-2,4-dihydroxycinnamoyl-CoA + succinate + CO2. It carries out the reaction (E)-feruloyl-CoA + 2-oxoglutarate + O2 = (E)-6-hydroxyferuloyl-CoA + succinate + CO2. The protein operates within phenylpropanoid metabolism. Repressed by the competitive inhibitor psoralen, but not by umbelliferone, xanthotoxin, bergapten and isopimpinellin. Functionally, 2-oxoglutarate (OG)- and Fe(II)-dependent dioxygenase (2OGD) involved in scopoletin and umbelliferone biosynthesis. Converts feruloyl CoA into 6'-hydroxyferuloyl CoA, and p-coumaroyl CoA into 2,4-dihydroxycinnamoyl-CoA. Has no activity with cinnamic acid, caffeic acid, p-coumaric acid, ferulic acid, cinnamoyl-CoA and caffeoyl-CoA. The polypeptide is Bi-functional coumaroyl CoA and feruloyl CoA ortho-hydroxylase Diox4 (Ruta graveolens (Common rue)).